We begin with the raw amino-acid sequence, 501 residues long: HMG-box protein STE11 (501 aa).

A compositionally biased stretch (polar residues) spans 142–153; sequence PVNMVGSLSGSP. Disordered regions lie at residues 142–205 and 246–293; these read PVNM…KRPL and YAEM…SLEQ. A compositionally biased stretch (low complexity) spans 192–204; sequence SRSGSSSSGIKRP. The HMG box DNA-binding region spans 201–265; that stretch reads IKRPLNSFML…RHAKEYPDYK (65 aa). Positions 246–263 are enriched in basic and acidic residues; it reads YAEMAQRERERHAKEYPD.

Phosphorylated by MAPK2.

It is found in the nucleus. The chain is HMG-box protein STE11 from Pneumocystis carinii.